Reading from the N-terminus, the 301-residue chain is Probable aspartoacylase (301 aa).

Zn(2+) contacts are provided by His13 and Glu16. Residues Arg54 and 61-62 (NR) contribute to the substrate site. A Zn(2+)-binding site is contributed by His105. Residues Glu163 and Tyr273 each contribute to the substrate site.

It belongs to the AspA/AstE family. Aspartoacylase subfamily. Zn(2+) serves as cofactor.

The catalysed reaction is an N-acyl-L-aspartate + H2O = a carboxylate + L-aspartate. The sequence is that of Probable aspartoacylase from Prochlorococcus marinus (strain MIT 9312).